The following is a 433-amino-acid chain: 3-phosphoshikimate 1-carboxyvinyltransferase (433 aa).

The 3-phosphoshikimate site is built by Lys22, Ser23, and Arg27. Lys22 is a binding site for phosphoenolpyruvate. 2 residues coordinate phosphoenolpyruvate: Gly95 and Arg123. 3-phosphoshikimate contacts are provided by Ser167, Gln169, Asp315, and Lys342. Position 169 (Gln169) interacts with phosphoenolpyruvate. Asp315 functions as the Proton acceptor in the catalytic mechanism. Residues Arg346 and Arg387 each contribute to the phosphoenolpyruvate site.

It belongs to the EPSP synthase family. As to quaternary structure, monomer.

It is found in the cytoplasm. It carries out the reaction 3-phosphoshikimate + phosphoenolpyruvate = 5-O-(1-carboxyvinyl)-3-phosphoshikimate + phosphate. The protein operates within metabolic intermediate biosynthesis; chorismate biosynthesis; chorismate from D-erythrose 4-phosphate and phosphoenolpyruvate: step 6/7. Catalyzes the transfer of the enolpyruvyl moiety of phosphoenolpyruvate (PEP) to the 5-hydroxyl of shikimate-3-phosphate (S3P) to produce enolpyruvyl shikimate-3-phosphate and inorganic phosphate. This Legionella pneumophila subsp. pneumophila (strain Philadelphia 1 / ATCC 33152 / DSM 7513) protein is 3-phosphoshikimate 1-carboxyvinyltransferase.